Here is a 734-residue protein sequence, read N- to C-terminus: DNA ligase (734 aa).

NAD(+) is bound by residues 42–46 (DAEYD), 91–92 (SL), and Glu-125. Lys-127 serves as the catalytic N6-AMP-lysine intermediate. Arg-148, Glu-185, Lys-301, and Lys-325 together coordinate NAD(+). 4 residues coordinate Zn(2+): Cys-430, Cys-433, Cys-454, and Cys-460. A BRCT domain is found at 655–734 (SADSEVAGKT…DTWLQRVGKA (80 aa)).

This sequence belongs to the NAD-dependent DNA ligase family. LigA subfamily. Mg(2+) is required as a cofactor. Mn(2+) serves as cofactor.

The catalysed reaction is NAD(+) + (deoxyribonucleotide)n-3'-hydroxyl + 5'-phospho-(deoxyribonucleotide)m = (deoxyribonucleotide)n+m + AMP + beta-nicotinamide D-nucleotide.. Functionally, DNA ligase that catalyzes the formation of phosphodiester linkages between 5'-phosphoryl and 3'-hydroxyl groups in double-stranded DNA using NAD as a coenzyme and as the energy source for the reaction. It is essential for DNA replication and repair of damaged DNA. The sequence is that of DNA ligase from Mesorhizobium japonicum (strain LMG 29417 / CECT 9101 / MAFF 303099) (Mesorhizobium loti (strain MAFF 303099)).